The sequence spans 546 residues: Membrane protein insertase YidC (546 aa).

A helical transmembrane segment spans residues 6–26; it reads NLLLIALLFVSFMIWQAWQVD. Low complexity predominate over residues 30 to 44; sequence QPTAQTTQQTTNTAT. A disordered region spans residues 30-55; it reads QPTAQTTQQTTNTATGDKASQAVPGS. Transmembrane regions (helical) follow at residues 344–364, 419–439, 457–477, and 498–518; these read KFIH…TFIV, LGGC…YYML, LSAQ…MYFI, and PVIF…YYIV.

Belongs to the OXA1/ALB3/YidC family. Type 1 subfamily. As to quaternary structure, interacts with the Sec translocase complex via SecD. Specifically interacts with transmembrane segments of nascent integral membrane proteins during membrane integration.

The protein resides in the cell inner membrane. In terms of biological role, required for the insertion and/or proper folding and/or complex formation of integral membrane proteins into the membrane. Involved in integration of membrane proteins that insert both dependently and independently of the Sec translocase complex, as well as at least some lipoproteins. Aids folding of multispanning membrane proteins. In Yersinia pestis, this protein is Membrane protein insertase YidC.